Consider the following 317-residue polypeptide: CTP-dependent diacylglycerol kinase 1 (317 aa).

Residues 1 to 44 (MANEEELQTAESAFVTGARRYSNDYSESESSSKHSGCSTPVEGT) are disordered. Residues 1–130 (MANEEELQTA…DVDYRNVRLP (130 aa)) lie on the Lumenal side of the membrane. Residues 23-38 (NDYSESESSSKHSGCS) show a composition bias toward low complexity. Residues 131-151 (LIVGFVHVLLLDVIRLHWPAF) traverse the membrane as a helical segment. The Cytoplasmic segment spans residues 152–167 (NTLYCQVTGLLMRKKE). A helical transmembrane segment spans residues 168–188 (VHTYNGVLWYLLGLIFAFSFF). The Lumenal portion of the chain corresponds to 189 to 190 (SK). Residues 191 to 211 (DVALVSLFLLSWCDTAASTVG) traverse the membrane as a helical segment. Residues 212 to 230 (RLYGHLTPRISRNKSLAGS) are Cytoplasmic-facing. The helical transmembrane segment at 231 to 251 (LAAFVVGVISCAVFYGYFVPA) threads the bilayer. Topologically, residues 252–271 (YSHVNHPGEIMWNPETSRLS) are lumenal. The helical transmembrane segment at 272 to 292 (LVQLSLLGGFVASLSEGIDLF) threads the bilayer. Asn-293 is a topological domain (cytoplasmic). A helical membrane pass occupies residues 294-314 (WDDNFTIPVLSAIFMHTIIAF). Over 315 to 317 (SQR) the chain is Lumenal.

Belongs to the DGK1 family. Ca(2+) serves as cofactor. Mg(2+) is required as a cofactor.

Its subcellular location is the endoplasmic reticulum membrane. It is found in the nucleus membrane. The catalysed reaction is a 1,2-diacyl-sn-glycerol + CTP = a 1,2-diacyl-sn-glycero-3-phosphate + CDP + H(+). In terms of biological role, CTP-dependent diacylglycerol kinase that catalyzes the phosphorylation of diacylglycerol (DAG) to phosphatidate (PA). Controls phosphatidate levels at the nuclear envelope. May be involved in vesicle trafficking between the endoplasmic reticulum and the Golgi apparatus. In Eremothecium gossypii (strain ATCC 10895 / CBS 109.51 / FGSC 9923 / NRRL Y-1056) (Yeast), this protein is CTP-dependent diacylglycerol kinase 1 (DGK1).